Here is a 394-residue protein sequence, read N- to C-terminus: Elongation factor Tu (394 aa).

In terms of domain architecture, tr-type G spans 10–204; that stretch reads KPHVNVGTIG…ALDTYIPEPE (195 aa). The interval 19–26 is G1; that stretch reads GHVDHGKT. GTP is bound at residue 19-26; the sequence is GHVDHGKT. Residue Thr26 participates in Mg(2+) binding. The segment at 60–64 is G2; it reads GITIN. Residues 81–84 are G3; the sequence is DCPG. GTP contacts are provided by residues 81–85 and 136–139; these read DCPGH and NKCD. A G4 region spans residues 136-139; that stretch reads NKCD. Positions 174–176 are G5; that stretch reads SAL.

It belongs to the TRAFAC class translation factor GTPase superfamily. Classic translation factor GTPase family. EF-Tu/EF-1A subfamily. As to quaternary structure, monomer.

Its subcellular location is the cytoplasm. The enzyme catalyses GTP + H2O = GDP + phosphate + H(+). Functionally, GTP hydrolase that promotes the GTP-dependent binding of aminoacyl-tRNA to the A-site of ribosomes during protein biosynthesis. This Shewanella denitrificans (strain OS217 / ATCC BAA-1090 / DSM 15013) protein is Elongation factor Tu.